A 433-amino-acid polypeptide reads, in one-letter code: Enolase (433 aa).

Gln-167 is a (2R)-2-phosphoglycerate binding site. The Proton donor role is filled by Glu-209. Positions 246, 291, and 318 each coordinate Mg(2+). Lys-343, Arg-372, Ser-373, and Lys-394 together coordinate (2R)-2-phosphoglycerate. The Proton acceptor role is filled by Lys-343.

Belongs to the enolase family. As to quaternary structure, component of the RNA degradosome, a multiprotein complex involved in RNA processing and mRNA degradation. Mg(2+) serves as cofactor.

Its subcellular location is the cytoplasm. It localises to the secreted. It is found in the cell surface. The catalysed reaction is (2R)-2-phosphoglycerate = phosphoenolpyruvate + H2O. It participates in carbohydrate degradation; glycolysis; pyruvate from D-glyceraldehyde 3-phosphate: step 4/5. Functionally, catalyzes the reversible conversion of 2-phosphoglycerate (2-PG) into phosphoenolpyruvate (PEP). It is essential for the degradation of carbohydrates via glycolysis. In Edwardsiella ictaluri (strain 93-146), this protein is Enolase.